The chain runs to 493 residues: Guanosine-5'-triphosphate,3'-diphosphate pyrophosphatase (493 aa).

The protein belongs to the GppA/Ppx family. GppA subfamily.

It catalyses the reaction guanosine 3'-diphosphate 5'-triphosphate + H2O = guanosine 3',5'-bis(diphosphate) + phosphate + H(+). It functions in the pathway purine metabolism; ppGpp biosynthesis; ppGpp from GTP: step 2/2. Functionally, catalyzes the conversion of pppGpp to ppGpp. Guanosine pentaphosphate (pppGpp) is a cytoplasmic signaling molecule which together with ppGpp controls the 'stringent response', an adaptive process that allows bacteria to respond to amino acid starvation, resulting in the coordinated regulation of numerous cellular activities. This is Guanosine-5'-triphosphate,3'-diphosphate pyrophosphatase from Salmonella paratyphi A (strain ATCC 9150 / SARB42).